The following is a 194-amino-acid chain: Large ribosomal subunit protein bL25 (194 aa).

The protein belongs to the bacterial ribosomal protein bL25 family. CTC subfamily. Part of the 50S ribosomal subunit; part of the 5S rRNA/L5/L18/L25 subcomplex. Contacts the 5S rRNA. Binds to the 5S rRNA independently of L5 and L18.

This is one of the proteins that binds to the 5S RNA in the ribosome where it forms part of the central protuberance. The polypeptide is Large ribosomal subunit protein bL25 (Parabacteroides distasonis (strain ATCC 8503 / DSM 20701 / CIP 104284 / JCM 5825 / NCTC 11152)).